The chain runs to 290 residues: 4-hydroxy-tetrahydrodipicolinate synthase (290 aa).

Residue Thr44 coordinates pyruvate. Residue Tyr132 is the Proton donor/acceptor of the active site. Catalysis depends on Lys160, which acts as the Schiff-base intermediate with substrate. A pyruvate-binding site is contributed by Ile202.

The protein belongs to the DapA family. Homotetramer; dimer of dimers.

It is found in the cytoplasm. It catalyses the reaction L-aspartate 4-semialdehyde + pyruvate = (2S,4S)-4-hydroxy-2,3,4,5-tetrahydrodipicolinate + H2O + H(+). It functions in the pathway amino-acid biosynthesis; L-lysine biosynthesis via DAP pathway; (S)-tetrahydrodipicolinate from L-aspartate: step 3/4. Functionally, catalyzes the condensation of (S)-aspartate-beta-semialdehyde [(S)-ASA] and pyruvate to 4-hydroxy-tetrahydrodipicolinate (HTPA). The sequence is that of 4-hydroxy-tetrahydrodipicolinate synthase from Cereibacter sphaeroides (strain ATCC 17025 / ATH 2.4.3) (Rhodobacter sphaeroides).